We begin with the raw amino-acid sequence, 282 residues long: Pantothenate synthetase (282 aa).

30-37 contacts ATP; it reads MGYLHEGH. The active-site Proton donor is the His37. Gln61 contributes to the (R)-pantoate binding site. Gln61 serves as a coordination point for beta-alanine. ATP is bound at residue 147-150; that stretch reads GMKD. Residue Gln153 coordinates (R)-pantoate. Residues Val176 and 184–187 each bind ATP; that span reads KSSR.

This sequence belongs to the pantothenate synthetase family. In terms of assembly, homodimer.

The protein localises to the cytoplasm. It catalyses the reaction (R)-pantoate + beta-alanine + ATP = (R)-pantothenate + AMP + diphosphate + H(+). It participates in cofactor biosynthesis; (R)-pantothenate biosynthesis; (R)-pantothenate from (R)-pantoate and beta-alanine: step 1/1. Its function is as follows. Catalyzes the condensation of pantoate with beta-alanine in an ATP-dependent reaction via a pantoyl-adenylate intermediate. The protein is Pantothenate synthetase of Bacillus anthracis (strain A0248).